A 1228-amino-acid polypeptide reads, in one-letter code: DNA repair protein rad5 (1228 aa).

Disordered regions lie at residues 1–96 (MDRH…GTLT), 194–242 (PPVR…VLPS), 280–302 (QPPTVARKGQTKPGTPQSIPRVS), and 445–474 (KAMDKAKAGDHNTNGLASPPEEAEEGQELE). Over residues 34-43 (PSSSPQFSAP) the composition is skewed to low complexity. Residues 70 to 83 (HNDDDDDDDDDDDE) show a composition bias toward acidic residues. The segment covering 211-237 (PKKSSTSQARSRSHAQAQPQPQSNTPT) has biased composition (polar residues). Basic and acidic residues predominate over residues 445 to 454 (KAMDKAKAGD). The span at 465–474 (EEAEEGQELE) shows a compositional bias: acidic residues. Residues 574 to 784 (PKQEQHCLGG…FSLVRFLRVE (211 aa)) form the Helicase ATP-binding domain. 587 to 594 (DEMGLGKT) is an ATP binding site. Residues 735–738 (DEAH) carry the DEAH box motif. The RING-type zinc finger occupies 967 to 1012 (CPICAEEPMIDQAVTGCWHSACKKCLLDYIKHQTDRNEVPRCFQCR). The Helicase C-terminal domain maps to 1060-1216 (ALISHLRTLR…MMSDEEKKMQ (157 aa)).

It belongs to the SNF2/RAD54 helicase family.

It is found in the cytoplasm. The protein localises to the nucleus. Probable helicase, member of the UBC2/RAD6 epistasis group. Functions with DNA repair protein uvs-2/rad18 in error-free postreplication DNA repair. Involved in the maintenance of wild-type rates of instability of simple repetitive sequences such as poly(GT) repeats. Seems to be involved in maintaining a balance which acts in favor of error-prone non-homologous joining during DNA double-strand breaks repairs. The sequence is that of DNA repair protein rad5 (mus-41) from Neurospora crassa (strain ATCC 24698 / 74-OR23-1A / CBS 708.71 / DSM 1257 / FGSC 987).